The following is a 191-amino-acid chain: UPF0398 protein LCABL_17010 (191 aa).

It belongs to the UPF0398 family.

The protein is UPF0398 protein LCABL_17010 of Lacticaseibacillus casei (strain BL23) (Lactobacillus casei).